We begin with the raw amino-acid sequence, 345 residues long: Tryptophan--tRNA ligase (345 aa).

ATP contacts are provided by residues 22–24 (QPS) and 30–31 (GN). Residues 23–31 (PSGELTIGN) carry the 'HIGH' region motif. D146 serves as a coordination point for L-tryptophan. Residues 158 to 160 (GID), V197, and 206 to 210 (KMSKS) each bind ATP. The 'KMSKS' region signature appears at 206-210 (KMSKS).

This sequence belongs to the class-I aminoacyl-tRNA synthetase family. As to quaternary structure, homodimer.

It localises to the cytoplasm. The catalysed reaction is tRNA(Trp) + L-tryptophan + ATP = L-tryptophyl-tRNA(Trp) + AMP + diphosphate + H(+). In terms of biological role, catalyzes the attachment of tryptophan to tRNA(Trp). This chain is Tryptophan--tRNA ligase, found in Photorhabdus laumondii subsp. laumondii (strain DSM 15139 / CIP 105565 / TT01) (Photorhabdus luminescens subsp. laumondii).